The primary structure comprises 447 residues: UDP-N-acetylmuramate--L-alanine ligase (447 aa).

108 to 114 (GSHGKTS) provides a ligand contact to ATP.

This sequence belongs to the MurCDEF family.

The protein resides in the cytoplasm. It catalyses the reaction UDP-N-acetyl-alpha-D-muramate + L-alanine + ATP = UDP-N-acetyl-alpha-D-muramoyl-L-alanine + ADP + phosphate + H(+). The protein operates within cell wall biogenesis; peptidoglycan biosynthesis. In terms of biological role, cell wall formation. This Listeria welshimeri serovar 6b (strain ATCC 35897 / DSM 20650 / CCUG 15529 / CIP 8149 / NCTC 11857 / SLCC 5334 / V8) protein is UDP-N-acetylmuramate--L-alanine ligase.